A 386-amino-acid polypeptide reads, in one-letter code: Zinc finger CCCH domain-containing protein 39 (386 aa).

A disordered region spans residues 1–90 (MDSSYSDSRP…SSSNPWMVPS (90 aa)). A compositionally biased stretch (polar residues) spans 20–37 (WNQTQMIDSMANPMNNEQ). A compositionally biased stretch (low complexity) spans 43–58 (LSESQSQSQPSQQLQP). Positions 72–85 (NPASSFPQPSSSNP) are enriched in polar residues. The C3H1-type 1 zinc finger occupies 104–131 (FYKTRMCAKFRAGTCRNGELCNFAHGIE). Residues 136–166 (PPSNWQEIVGPPPAGQDRERERERERERERP) are disordered. Positions 151–166 (QDRERERERERERERP) are enriched in basic and acidic residues. C3H1-type zinc fingers lie at residues 183-211 (ILRMKLCRKFCFGEECPYGDRCNFIHEDL) and 269-297 (YWKTRLCMKFDITGQCPFGDKCHFAHGQA).

This Arabidopsis thaliana (Mouse-ear cress) protein is Zinc finger CCCH domain-containing protein 39.